The following is a 414-amino-acid chain: Eukaryotic initiation factor 4A (414 aa).

Positions 41–69 (ESFDDMGLQENLLRGIYAYGFEKPSAIQQ) match the Q motif motif. A Helicase ATP-binding domain is found at 72–242 (IVPFCKGLDV…RKFMNKPVRI (171 aa)). ATP is bound at residue 85 to 92 (AQSGTGKT). The short motif at 190 to 193 (DEAD) is the DEAD box element. The region spanning 253-414 (GIKQFYVNVE…ELPANVADLL (162 aa)) is the Helicase C-terminal domain.

Belongs to the DEAD box helicase family. eIF4A subfamily. EIF4F is a multi-subunit complex, the composition of which varies with external and internal environmental conditions. It is composed of at least EIF4A, EIF4E and EIF4G.

The catalysed reaction is ATP + H2O = ADP + phosphate + H(+). Its function is as follows. ATP-dependent RNA helicase which is a subunit of the eIF4F complex involved in cap recognition and is required for mRNA binding to ribosome. In the current model of translation initiation, eIF4A unwinds RNA secondary structures in the 5'-UTR of mRNAs which is necessary to allow efficient binding of the small ribosomal subunit, and subsequent scanning for the initiator codon. The protein is Eukaryotic initiation factor 4A of Triticum aestivum (Wheat).